The chain runs to 450 residues: ADP-specific phosphofructokinase (450 aa).

The ADPK domain occupies 1-449 (MIPEHLSIYT…FLTYLEFLKR (449 aa)). Residues Glu-260, Glu-290, and Asp-433 each coordinate Mg(2+). Residue Asp-433 is the Proton acceptor of the active site.

This sequence belongs to the carbohydrate kinase PfkC family. Mg(2+) is required as a cofactor.

It is found in the cytoplasm. The catalysed reaction is beta-D-fructose 6-phosphate + ADP = beta-D-fructose 1,6-bisphosphate + AMP + H(+). The protein operates within carbohydrate degradation; glycolysis. Functionally, catalyzes the phosphorylation of fructose 6-phosphate to fructose 1,6-bisphosphate using ADP as the phosphate donor. The chain is ADP-specific phosphofructokinase from Pyrococcus horikoshii (strain ATCC 700860 / DSM 12428 / JCM 9974 / NBRC 100139 / OT-3).